We begin with the raw amino-acid sequence, 742 residues long: G2/M phase-specific E3 ubiquitin-protein ligase (742 aa).

A C2HC pre-PHD-type zinc finger spans residues 10-50; that stretch reads SPPCVLCGWTDNCPEKYGEKRTYVEYNLTLHNYCLLMSSGI. A PHD-type 1 zinc finger spans residues 78 to 127; that stretch reads LMCNICRKKGASIGCVAPKCKRSYHFPCGLQKECVFQFMEDFRSYCWEHK. A PHD-type 2; degenerate zinc finger spans residues 142 to 192; sequence QCTICLDLVEHLPLYSVLRSPCCKNTWFHRECLQYQALSAGIFFFRCAVCN. The segment at 236–285 adopts a PHD-type 3 zinc-finger fold; sequence RCLCKNGRDYNKPDSKWEIKRCQSCGSRGTHLACSSIKSWEQNWECVECR. Residues 417–742 enclose the HECT domain; it reads KGFRQRNFRP…IRSTLRGERE (326 aa).

Its subcellular location is the nucleus. It is found in the nucleolus. The protein localises to the cytoplasm. The enzyme catalyses S-ubiquitinyl-[E2 ubiquitin-conjugating enzyme]-L-cysteine + [acceptor protein]-L-lysine = [E2 ubiquitin-conjugating enzyme]-L-cysteine + N(6)-ubiquitinyl-[acceptor protein]-L-lysine.. It participates in protein modification; protein ubiquitination. E3 ubiquitin-protein ligase which accepts ubiquitin from an E2 ubiquitin-conjugating enzyme in the form of a thioester and then directly transfers the ubiquitin to targeted substrates. Essential in early embryonic development to prevent apoptotic death. The polypeptide is G2/M phase-specific E3 ubiquitin-protein ligase (G2E3) (Gallus gallus (Chicken)).